Reading from the N-terminus, the 527-residue chain is Cytochrome b5 reductase 4 (527 aa).

The segment at 1-24 (MLNVPSQAFPAAGSQQRVAPAGQS) is disordered. The Cytochrome b5 heme-binding domain maps to 56-132 (LIEVTEDELK…LKECLVGRMA (77 aa)). The heme site is built by His91 and His114. The disordered stretch occupies residues 138-171 (ALQAHTEKTESTHLNGLSAPPSLRPEPLSAPLPA). The region spanning 173–264 (DHRPRYDWFQ…SVKEKWTQLG (92 aa)) is the CS domain. The region spanning 281–392 (LFYRECVLLS…GGPEGSFTLR (112 aa)) is the FAD-binding FR-type domain. Residues 372 to 387 (ANLPIGASLSVGGPEG) and 399 to 431 (HLYMLAAGTGFTPMARLIRLALQDFTVIRKMKL) each bind FAD.

It belongs to the flavoprotein pyridine nucleotide cytochrome reductase family. FAD serves as cofactor.

The protein localises to the endoplasmic reticulum. It carries out the reaction 2 Fe(III)-[cytochrome b5] + NADH = 2 Fe(II)-[cytochrome b5] + NAD(+) + H(+). Its function is as follows. NADH-cytochrome b5 reductase involved in endoplasmic reticulum stress response pathway. The polypeptide is Cytochrome b5 reductase 4 (cyb5r4) (Danio rerio (Zebrafish)).